The sequence spans 192 residues: MSNTIKMVVGLGNPGKEYEQTRHNAGFWFLDELAWKWKASFKEEKKFFGEVARATLPDGDVWLLKPTTFMNRSGQAVAALAQFYKIKPEEILVVHDELDIPCGRIKFKLGGGNGGHNGLKDIQAKLGTADYYRLRLGIGHPGDRNLVVGYVLNKPSTEHRRQIDDAVAKSLQAIPDILAGKCEEATRFLHSK.

A tRNA-binding site is contributed by Y18. The Proton acceptor role is filled by H23. 3 residues coordinate tRNA: F69, N71, and N117.

Belongs to the PTH family. In terms of assembly, monomer.

It localises to the cytoplasm. The catalysed reaction is an N-acyl-L-alpha-aminoacyl-tRNA + H2O = an N-acyl-L-amino acid + a tRNA + H(+). Hydrolyzes ribosome-free peptidyl-tRNAs (with 1 or more amino acids incorporated), which drop off the ribosome during protein synthesis, or as a result of ribosome stalling. In terms of biological role, catalyzes the release of premature peptidyl moieties from peptidyl-tRNA molecules trapped in stalled 50S ribosomal subunits, and thus maintains levels of free tRNAs and 50S ribosomes. The protein is Peptidyl-tRNA hydrolase of Neisseria meningitidis serogroup A / serotype 4A (strain DSM 15465 / Z2491).